The primary structure comprises 135 residues: Large ribosomal subunit protein uL16c (135 aa).

The protein belongs to the universal ribosomal protein uL16 family. Part of the 50S ribosomal subunit.

It is found in the plastid. Its subcellular location is the chloroplast. The polypeptide is Large ribosomal subunit protein uL16c (Platanus occidentalis (Sycamore)).